Consider the following 273-residue polypeptide: Large ribosomal subunit protein uL2 (273 aa).

Disordered stretches follow at residues 28-53 (KPFA…TTRH) and 221-273 (RGTA…RRTK). The span at 39-48 (KSGGRNNNGR) shows a compositional bias: low complexity.

Belongs to the universal ribosomal protein uL2 family. Part of the 50S ribosomal subunit. Forms a bridge to the 30S subunit in the 70S ribosome.

Functionally, one of the primary rRNA binding proteins. Required for association of the 30S and 50S subunits to form the 70S ribosome, for tRNA binding and peptide bond formation. It has been suggested to have peptidyltransferase activity; this is somewhat controversial. Makes several contacts with the 16S rRNA in the 70S ribosome. The polypeptide is Large ribosomal subunit protein uL2 (Pectobacterium atrosepticum (strain SCRI 1043 / ATCC BAA-672) (Erwinia carotovora subsp. atroseptica)).